Reading from the N-terminus, the 159-residue chain is Transcriptional repressor NrdR (159 aa).

Residues 1 to 11 are compositionally biased toward polar residues; it reads MQCPTCQNTDS. A disordered region spans residues 1-21; it reads MQCPTCQNTDSRVLESRSADS. A zinc finger spans residues 3 to 34; the sequence is CPTCQNTDSRVLESRSADSGKSVRRRRECLNC. Positions 49 to 139 constitute an ATP-cone domain; sequence VSVMKKDGSR…VYRKFNGVKD (91 aa).

Belongs to the NrdR family. The cofactor is Zn(2+).

Negatively regulates transcription of bacterial ribonucleotide reductase nrd genes and operons by binding to NrdR-boxes. The sequence is that of Transcriptional repressor NrdR from Prochlorococcus marinus (strain MIT 9215).